Consider the following 323-residue polypeptide: Forkhead transcription factor fkh-6 (323 aa).

Residues 21–122 (KPPYSYVALI…DNGNFKRRRV (102 aa)) constitute a DNA-binding region (fork-head).

The protein localises to the nucleus. In terms of biological role, probable transcription factor. Binds to the DNA sequence motif 5'-[TA]TGTT[TG]T[TG][ATG]TT-3'. Regulates sexual dimorphism in the gonad, promoting male gonadal cell fates in chromosomally (XO) male animals, yet plays a role in gonadogenesis in both sexes; probably acts downstream of terminal regulator of sex determination tra-1, to control early gonadogenesis. Positively modulates expression of homeobox protein egl-5, probably acting indirectly, during early gonadal development. The polypeptide is Forkhead transcription factor fkh-6 (Caenorhabditis elegans).